Here is a 533-residue protein sequence, read N- to C-terminus: Multicopper oxidase CueO (533 aa).

The tat-type signal signal peptide spans 1–28 (MHRRDFLKLTAALGAATSLPLWSRAALA). 3 Plastocyanin-like domains span residues 53 to 166 (QTGS…IDDS), 221 to 290 (PYPQ…DTRD), and 416 to 532 (AFNF…FTVS). Positions 102, 104, 142, and 144 each coordinate Cu cation. Cu cation contacts are provided by histidine 458, histidine 461, histidine 463, histidine 514, cysteine 515, histidine 516, and histidine 520.

The protein belongs to the multicopper oxidase family. Monomer. Cu cation is required as a cofactor. Post-translationally, predicted to be exported by the Tat system. The position of the signal peptide cleavage has not been experimentally proven.

It localises to the periplasm. It carries out the reaction 4 Cu(+) + O2 + 4 H(+) = 4 Cu(2+) + 2 H2O. Multicopper oxidase involved in copper homeostasis and copper tolerance under aerobic conditions. Is responsible for the oxidation of Cu(+) to the less harmful Cu(2+) in the periplasm, thereby preventing Cu(+) from entering the cytoplasm. This chain is Multicopper oxidase CueO (cueO), found in Yersinia pestis.